The chain runs to 283 residues: Thymidylate synthase (283 aa).

Arg-22 provides a ligand contact to dUMP. Catalysis depends on Cys-160, which acts as the Nucleophile. DUMP contacts are provided by residues 180–183 (RSCD), Asn-191, and 221–223 (HIY). Asp-183 is a binding site for (6R)-5,10-methylene-5,6,7,8-tetrahydrofolate. Residue Ser-282 coordinates (6R)-5,10-methylene-5,6,7,8-tetrahydrofolate.

This sequence belongs to the thymidylate synthase family. Bacterial-type ThyA subfamily. As to quaternary structure, homodimer.

It is found in the cytoplasm. It carries out the reaction dUMP + (6R)-5,10-methylene-5,6,7,8-tetrahydrofolate = 7,8-dihydrofolate + dTMP. Its pathway is pyrimidine metabolism; dTTP biosynthesis. Catalyzes the reductive methylation of 2'-deoxyuridine-5'-monophosphate (dUMP) to 2'-deoxythymidine-5'-monophosphate (dTMP) while utilizing 5,10-methylenetetrahydrofolate (mTHF) as the methyl donor and reductant in the reaction, yielding dihydrofolate (DHF) as a by-product. This enzymatic reaction provides an intracellular de novo source of dTMP, an essential precursor for DNA biosynthesis. This is Thymidylate synthase from Shewanella piezotolerans (strain WP3 / JCM 13877).